Here is a 1414-residue protein sequence, read N- to C-terminus: Calcium-transporting ATPase 2 (1414 aa).

2 disordered regions span residues 1–231 (MSRN…PSRL) and 265–294 (AVGTDEGNAENGAPRSSADMPGGNGPQWRA). Topologically, residues 1–327 (MSRNNPPPVI…LLMWLAFKDK (327 aa)) are cytoplasmic. Composition is skewed to low complexity over residues 33-53 (PTPTLVIPGSPASESSHPESP) and 75-96 (SPTPSYSSALTPPSPTLTSSSS). Residues 179–189 (DGDRGEDDANK) are compositionally biased toward basic and acidic residues. A compositionally biased stretch (basic residues) spans 190-201 (KGKKDKKGKKGK). The segment covering 202 to 229 (KDKEEPPSAHLDPDKDKTDPTPFREKPS) has biased composition (basic and acidic residues). Residues 328–348 (VLILLSVAAVVSLALGLYQDL) traverse the membrane as a helical segment. At 349 to 370 (GTPPKIIYNDECPDGCEEAQVD) the chain is on the vacuolar side. Residues 371–391 (WVEGVAIVVAIIIVVLVGSIN) traverse the membrane as a helical segment. The Cytoplasmic portion of the chain corresponds to 392–541 (DWQKERQFKK…TPLQIKLNHL (150 aa)). The chain crosses the membrane as a helical span at residues 542–562 (AELIAKLGGASGLLLFIALMI). The Vacuolar portion of the chain corresponds to 563-585 (RFFVQLKTNPDRSANDKAQSFIQ). A helical transmembrane segment spans residues 586 to 606 (ILIIAVTLVVVAVPEGLPLAV). Ca(2+) contacts are provided by V595 and E600. The Cytoplasmic portion of the chain corresponds to 607-1040 (TLALAFATKR…GRCVNDSVKK (434 aa)). D642 acts as the 4-aspartylphosphate intermediate in catalysis. Mg(2+) is bound by residues D642 and T644. ATP contacts are provided by residues T644, E737, R779, 909–911 (TGD), R958, and K964. Mg(2+) is bound at residue D983. N986 provides a ligand contact to ATP. Residues 1041–1061 (FLQFQISVNITAVFITFISAV) traverse the membrane as a helical segment. A Ca(2+)-binding site is contributed by N1049. Over 1062-1068 (ASSSEES) the chain is Vacuolar. A helical transmembrane segment spans residues 1069 to 1089 (VLTAVQLLWVNLIMDTFAALA). Positions 1079 and 1083 each coordinate Ca(2+). The Cytoplasmic segment spans residues 1090–1118 (LATDPATESSLDRKPDRKNAPLITVEMFK). A helical membrane pass occupies residues 1119 to 1139 (MIMVQAIYQIIVCLVLHFAGL). Over 1140–1153 (KILGLEDNDQNNTE) the chain is Vacuolar. A helical membrane pass occupies residues 1154–1171 (LGALVFNCFVFCQIFNQL). At 1172-1191 (NCRRLDRKLNVLEGFWRNWY) the chain is on the cytoplasmic side. The helical transmembrane segment at 1192–1212 (FIIIFLIMVGGQILIVEVGGA) threads the bilayer. E1208 lines the Ca(2+) pocket. At 1213–1223 (AFQVTRLGGRD) the chain is on the vacuolar side. Residues 1224 to 1244 (WGITLVIGALSLPIGALVRLT) form a helical membrane-spanning segment. Over 1245 to 1414 (PTGPFARLLV…GLSSGDANNV (170 aa)) the chain is Cytoplasmic. Residues 1376–1414 (PRTNPDDPLYAKFGLQPPESRGSSVSGAEGLSSGDANNV) are disordered.

It belongs to the cation transport ATPase (P-type) (TC 3.A.3) family.

It is found in the vacuole membrane. It catalyses the reaction Ca(2+)(in) + ATP + H2O = Ca(2+)(out) + ADP + phosphate + H(+). Functionally, this magnesium-dependent enzyme catalyzes the hydrolysis of ATP coupled with the transport of calcium. Transports calcium to the vacuole and participates in the control of cytosolic free calcium. In Cryptococcus neoformans var. grubii serotype A (strain H99 / ATCC 208821 / CBS 10515 / FGSC 9487) (Filobasidiella neoformans var. grubii), this protein is Calcium-transporting ATPase 2.